The primary structure comprises 171 residues: AN1-type zinc finger protein 2A (171 aa).

AN1-type zinc fingers lie at residues 4–52 (PDLG…KKDV) and 94–142 (KVFT…SSAS). Residues Cys10, Cys15, Cys25, Cys28, Cys33, His36, His42, Cys44, Cys100, Cys105, Cys115, Cys118, Cys123, His126, His132, and Cys134 each contribute to the Zn(2+) site. Residues 134 to 171 (CQAGSSSASRGRTSTSRAAEQKPSGVSWLAQRLRRTVK) form a disordered region. Residues 136 to 151 (AGSSSASRGRTSTSRA) are compositionally biased toward low complexity.

It localises to the cytoplasm. It is found in the nucleus. This chain is AN1-type zinc finger protein 2A (Zfand2a), found in Mus musculus (Mouse).